The following is a 594-amino-acid chain: Proteasome-associated ATPase (594 aa).

A compositionally biased stretch (polar residues) spans 1-12 (MTETSANKPENT). The disordered stretch occupies residues 1–20 (MTETSANKPENTQAHEGRDY). A coiled-coil region spans residues 18-71 (RDYSVLERQFNVLRDKLRNVDRQLAAATQNNTKMTTTLQSAKAEILRLKSALEK). Position 282–287 (282–287 (GCGKTL)) interacts with ATP. The segment at 593 to 594 (YL) is docks into pockets in the proteasome alpha-ring.

The protein belongs to the AAA ATPase family. Homohexamer. Assembles into a hexameric ring structure that caps the 20S proteasome core. Strongly interacts with the prokaryotic ubiquitin-like protein Pup through a hydrophobic interface; the interacting region of ARC lies in its N-terminal coiled-coil domain. There is one Pup binding site per ARC hexamer ring. Upon ATP-binding, the C-terminus of ARC interacts with the alpha-rings of the proteasome core, possibly by binding to the intersubunit pockets.

It participates in protein degradation; proteasomal Pup-dependent pathway. Functionally, ATPase which is responsible for recognizing, binding, unfolding and translocation of pupylated proteins into the bacterial 20S proteasome core particle. May be essential for opening the gate of the 20S proteasome via an interaction with its C-terminus, thereby allowing substrate entry and access to the site of proteolysis. Thus, the C-termini of the proteasomal ATPase may function like a 'key in a lock' to induce gate opening and therefore regulate proteolysis. In Renibacterium salmoninarum (strain ATCC 33209 / DSM 20767 / JCM 11484 / NBRC 15589 / NCIMB 2235), this protein is Proteasome-associated ATPase.